A 255-amino-acid polypeptide reads, in one-letter code: MLVMAGLGLYDERDVTLKTLDFAKKVDKIYAEFYTAILTGTSMEKIENTLQKPITVLDREKVEYETNKLIEEAVDKDIMFLTAGDPMVATTHVDIAVEARKKGIEVVIINAPSIYSAIGITGLQLYKFGKTTSVVFPEPNYFPETPYDVIKDNLKLGYHTLCLLDIQADKERFMTANEGLDALLKIEEKRNENVISGETYAAVVARAGSIKPGLYYGKIKDLINYDFGTPLHCVIIPGKLHFMEEDALKYLFENI.

S-adenosyl-L-methionine-binding positions include Leu-9, Asp-85, Val-88, 113-114 (SI), Leu-164, Ala-207, and His-232.

The protein belongs to the diphthine synthase family. Homodimer.

It catalyses the reaction 2-[(3S)-amino-3-carboxypropyl]-L-histidyl-[translation elongation factor 2] + 3 S-adenosyl-L-methionine = diphthine-[translation elongation factor 2] + 3 S-adenosyl-L-homocysteine + 3 H(+). The protein operates within protein modification; peptidyl-diphthamide biosynthesis. S-adenosyl-L-methionine-dependent methyltransferase that catalyzes the trimethylation of the amino group of the modified target histidine residue in translation elongation factor 2 (EF-2), to form an intermediate called diphthine. The three successive methylation reactions represent the second step of diphthamide biosynthesis. This chain is Diphthine synthase, found in Methanococcus maripaludis (strain C7 / ATCC BAA-1331).